Here is a 61-residue protein sequence, read N- to C-terminus: Defensin-like peptide TXKs2 (61 aa).

Residues 1–19 form the signal peptide; that stretch reads MTYAILIIVSLLLISDRIS. Residues 20–22 constitute a propeptide that is removed on maturation; sequence NVV. 3 cysteine pairs are disulfide-bonded: Cys-26–Cys-47, Cys-33–Cys-56, and Cys-37–Cys-58.

It belongs to the invertebrate defensin family. In terms of tissue distribution, expressed by the venom gland.

Its subcellular location is the secreted. In terms of biological role, antibacterial protein. This chain is Defensin-like peptide TXKs2, found in Olivierus martensii (Manchurian scorpion).